Consider the following 238-residue polypeptide: Uridylate kinase (238 aa).

12 to 15 serves as a coordination point for ATP; the sequence is KLSG. UMP is bound at residue G54. 2 residues coordinate ATP: G55 and R59. UMP is bound by residues D74 and 135 to 142; that span reads TGNPYFTT. ATP is bound by residues T162, N163, Y168, and D171.

The protein belongs to the UMP kinase family. In terms of assembly, homohexamer.

The protein localises to the cytoplasm. It carries out the reaction UMP + ATP = UDP + ADP. It functions in the pathway pyrimidine metabolism; CTP biosynthesis via de novo pathway; UDP from UMP (UMPK route): step 1/1. Its activity is regulated as follows. Inhibited by UTP. Functionally, catalyzes the reversible phosphorylation of UMP to UDP. The sequence is that of Uridylate kinase from Nitrobacter winogradskyi (strain ATCC 25391 / DSM 10237 / CIP 104748 / NCIMB 11846 / Nb-255).